Here is a 46-residue protein sequence, read N- to C-terminus: Putative antitoxin VapB3 (46 aa).

This sequence belongs to the UPF0165 family.

Its function is as follows. Possibly the antitoxin component of a type II toxin-antitoxin (TA) system. Its cognate toxin is VapC3 (Potential). The sequence is that of Putative antitoxin VapB3 (vapB3) from Pyrococcus furiosus (strain ATCC 43587 / DSM 3638 / JCM 8422 / Vc1).